The chain runs to 1373 residues: DNA-directed RNA polymerase subunit beta (1373 aa).

It belongs to the RNA polymerase beta chain family. The RNAP catalytic core consists of 2 alpha, 1 beta, 1 beta' and 1 omega subunit. When a sigma factor is associated with the core the holoenzyme is formed, which can initiate transcription.

The catalysed reaction is RNA(n) + a ribonucleoside 5'-triphosphate = RNA(n+1) + diphosphate. DNA-dependent RNA polymerase catalyzes the transcription of DNA into RNA using the four ribonucleoside triphosphates as substrates. This chain is DNA-directed RNA polymerase subunit beta, found in Rickettsia peacockii (strain Rustic).